The following is a 129-amino-acid chain: Large ribosomal subunit protein bL12 (129 aa).

Belongs to the bacterial ribosomal protein bL12 family. In terms of assembly, homodimer. Part of the ribosomal stalk of the 50S ribosomal subunit. Forms a multimeric L10(L12)X complex, where L10 forms an elongated spine to which 2 to 4 L12 dimers bind in a sequential fashion. Binds GTP-bound translation factors.

Its function is as follows. Forms part of the ribosomal stalk which helps the ribosome interact with GTP-bound translation factors. Is thus essential for accurate translation. The protein is Large ribosomal subunit protein bL12 of Photobacterium profundum (strain SS9).